The sequence spans 740 residues: Elongation factor 2 (740 aa).

Residues 23–264 enclose the tr-type G domain; the sequence is AQIRNAGTLA…MIIEHVPPPN (242 aa). GTP contacts are provided by residues 32–39, 98–102, and 152–155; these read AHVDHGKT, DTPGH, and NKID. At H605 the chain carries Diphthamide.

It belongs to the TRAFAC class translation factor GTPase superfamily. Classic translation factor GTPase family. EF-G/EF-2 subfamily.

It is found in the cytoplasm. Catalyzes the GTP-dependent ribosomal translocation step during translation elongation. During this step, the ribosome changes from the pre-translocational (PRE) to the post-translocational (POST) state as the newly formed A-site-bound peptidyl-tRNA and P-site-bound deacylated tRNA move to the P and E sites, respectively. Catalyzes the coordinated movement of the two tRNA molecules, the mRNA and conformational changes in the ribosome. This is Elongation factor 2 from Pyrobaculum arsenaticum (strain DSM 13514 / JCM 11321 / PZ6).